We begin with the raw amino-acid sequence, 400 residues long: Inosine-5'-monophosphate dehydrogenase (400 aa).

The span at 96–116 shows a compositional bias: basic and acidic residues; sequence KNESTPDQNLDKESTDGKDTK. The disordered stretch occupies residues 96-125; sequence KNESTPDQNLDKESTDGKDTKSNNNIDAYS. NAD(+) is bound by residues aspartate 163 and 212–214; that span reads GIG. Glycine 214 and glycine 216 together coordinate K(+). Residue serine 217 participates in IMP binding. Cysteine 219 contacts K(+). Residue cysteine 219 is the Thioimidate intermediate of the active site. IMP contacts are provided by residues 252–254, 275–276, and 299–303; these read DGG, GS, and YRGMG. Catalysis depends on arginine 315, which acts as the Proton acceptor. Glutamate 329 is an IMP binding site. The K(+) site is built by glutamate 383, serine 384, and histidine 385.

This sequence belongs to the IMPDH/GMPR family. Homotetramer. K(+) serves as cofactor.

The protein resides in the cytoplasm. The catalysed reaction is IMP + NAD(+) + H2O = XMP + NADH + H(+). It participates in purine metabolism; XMP biosynthesis via de novo pathway; XMP from IMP: step 1/1. With respect to regulation, mycophenolic acid (MPA) is a non-competitive inhibitor that prevents formation of the closed enzyme conformation by binding to the same site as the amobile flap. In contrast, mizoribine monophosphate (MZP) is a competitive inhibitor that induces the closed conformation. MPA is a potent inhibitor of mammalian IMPDHs but a poor inhibitor of the bacterial enzymes. MZP is a more potent inhibitor of bacterial IMPDH. Resistant to mycophenolic acid (MPA) inhibition. In terms of biological role, catalyzes the conversion of inosine 5'-phosphate (IMP) to xanthosine 5'-phosphate (XMP), the first committed and rate-limiting step in the de novo synthesis of guanine nucleotides, and therefore plays an important role in the regulation of cell growth. This is Inosine-5'-monophosphate dehydrogenase from Cryptosporidium parvum.